The following is a 333-amino-acid chain: Protoheme IX farnesyltransferase (333 aa).

The next 8 membrane-spanning stretches (helical) occupy residues 36 to 56 (LIPLLLATTLGGMALTEGWPL), 61 to 81 (LVCTLGGGALAAAAAGVLNCL), 107 to 127 (AAFAGAVSCALAAATLLVSGV), 130 to 150 (LAAGLSLLGLCSYVLLYTALL), 158 to 178 (IVIGGVAGAIPPLVGAAAATG), 186 to 206 (WLFALVMVWTPAHFWALALLL), 243 to 263 (FLGVWALPEGGLLYGLLLLPF), and 284 to 304 (AKGLFRWSILYLFGICLLLVF).

This sequence belongs to the UbiA prenyltransferase family. Protoheme IX farnesyltransferase subfamily.

The protein resides in the cell inner membrane. The catalysed reaction is heme b + (2E,6E)-farnesyl diphosphate + H2O = Fe(II)-heme o + diphosphate. The protein operates within porphyrin-containing compound metabolism; heme O biosynthesis; heme O from protoheme: step 1/1. Converts heme B (protoheme IX) to heme O by substitution of the vinyl group on carbon 2 of heme B porphyrin ring with a hydroxyethyl farnesyl side group. This chain is Protoheme IX farnesyltransferase, found in Synechococcus sp. (strain WH7803).